The chain runs to 292 residues: Acetylglutamate kinase (292 aa).

Substrate is bound by residues 64–65, Arg86, and Asn190; that span reads GG.

This sequence belongs to the acetylglutamate kinase family. ArgB subfamily.

It localises to the cytoplasm. It catalyses the reaction N-acetyl-L-glutamate + ATP = N-acetyl-L-glutamyl 5-phosphate + ADP. Its pathway is amino-acid biosynthesis; L-arginine biosynthesis; N(2)-acetyl-L-ornithine from L-glutamate: step 2/4. Catalyzes the ATP-dependent phosphorylation of N-acetyl-L-glutamate. The protein is Acetylglutamate kinase of Citrifermentans bemidjiense (strain ATCC BAA-1014 / DSM 16622 / JCM 12645 / Bem) (Geobacter bemidjiensis).